A 558-amino-acid chain; its full sequence is Podocalyxin (558 aa).

The N-terminal stretch at 1–22 is a signal peptide; the sequence is MRCALALSALLLLLSTPPLLPS. A compositionally biased stretch (pro residues) spans 20–29; that stretch reads LPSSPSPSPS. 3 disordered regions span residues 20-50, 83-210, and 270-338; these read LPSS…PTPA, LGVS…DHLM, and SVIS…VAHE. The Extracellular segment spans residues 23–461; that stretch reads SPSPSPSPSQ…EEAEDRFSMP (439 aa). Polar residues-rich tracts occupy residues 32-50 and 83-107; these read QNAT…PTPA and LGVS…NTTV. N33, N43, and N104 each carry an N-linked (GlcNAc...) asparagine glycan. The span at 125–142 shows a compositional bias: low complexity; it reads STKSADTTTVATSTATAK. Composition is skewed to polar residues over residues 143 to 173, 190 to 204, and 270 to 302; these read PNTT…LTST, RQPT…PTSS, and SVIS…TSPA. A glycan (N-linked (GlcNAc...) asparagine) is linked at N144. Low complexity predominate over residues 313–324; the sequence is TMSSSPTAASTT. N360 carries an N-linked (GlcNAc...) asparagine glycan. The chain crosses the membrane as a helical span at residues 462–482; the sequence is LIITIVCMASFLLLVAALYGC. At 483–558 the chain is on the cytoplasmic side; sequence CHQRLSQRKD…DLDEEEDTHL (76 aa). A Phosphothreonine modification is found at T518. Residues S529 and S537 each carry the phosphoserine modification. T556 bears the Phosphothreonine mark.

Belongs to the podocalyxin family. In terms of assembly, monomer; when associated with the membrane raft. Oligomer; when integrated in the apical membrane. Interacts (via the C-terminal PDZ-binding motif DTHL) with NHERF1 (via the PDZ domains); the interaction is not detected in glomerular epithelium cells, take place early in the secretory pathway and is necessary for its apical membrane sorting. Found in a complex with EZR, PODXL and NHERF2. Associates with the actin cytoskeleton through complex formation with EZR and NHERF2. Interacts (via the C-terminal PDZ-binding motif DTHL) with NHERF2 (via the PDZ 1 domain); interaction is detected in glomerular epithelium cells. Interacts with EZR. N- and O-linked glycosylated. Sialoglycoprotein. Glomerular epithelium cell (podocyte).

It is found in the apical cell membrane. The protein resides in the cell projection. Its subcellular location is the lamellipodium. It localises to the filopodium. The protein localises to the ruffle. It is found in the microvillus. The protein resides in the membrane raft. Its subcellular location is the membrane. In terms of biological role, involved in the regulation of both adhesion and cell morphology and cancer progression. Functions as an anti-adhesive molecule that maintains an open filtration pathway between neighboring foot processes in the podocyte by charge repulsion. Acts as a pro-adhesive molecule, enhancing the adherence of cells to immobilized ligands, increasing the rate of migration and cell-cell contacts in an integrin-dependent manner. Induces the formation of apical actin-dependent microvilli. Involved in the formation of a preapical plasma membrane subdomain to set up initial epithelial polarization and the apical lumen formation during renal tubulogenesis. Plays a role in cancer development and aggressiveness by inducing cell migration and invasion through its interaction with the actin-binding protein EZR. Affects EZR-dependent signaling events, leading to increased activities of the MAPK and PI3K pathways in cancer cells. The sequence is that of Podocalyxin (PODXL) from Homo sapiens (Human).